We begin with the raw amino-acid sequence, 202 residues long: Large ribosomal subunit protein bL25 (202 aa).

The tract at residues 1–21 is disordered; the sequence is MSKESYELKAEARERVGKGSS.

This sequence belongs to the bacterial ribosomal protein bL25 family. CTC subfamily. Part of the 50S ribosomal subunit; part of the 5S rRNA/L5/L18/L25 subcomplex. Contacts the 5S rRNA. Binds to the 5S rRNA independently of L5 and L18.

Functionally, this is one of the proteins that binds to the 5S RNA in the ribosome where it forms part of the central protuberance. In Agrobacterium fabrum (strain C58 / ATCC 33970) (Agrobacterium tumefaciens (strain C58)), this protein is Large ribosomal subunit protein bL25.